The primary structure comprises 338 residues: Holliday junction branch migration complex subunit RuvB (338 aa).

Positions 1 to 22 are disordered; sequence MVDDERVVSPETADDHEDSVEK. The segment at 4–185 is large ATPase domain (RuvB-L); the sequence is DERVVSPETA…FGIVEHMAYY (182 aa). ATP is bound by residues Leu-24, Arg-25, Gly-66, Lys-69, Thr-70, Thr-71, 132–134, Arg-175, Tyr-185, and Arg-222; that span reads EDF. Thr-70 lines the Mg(2+) pocket. A small ATPAse domain (RuvB-S) region spans residues 186-257; that stretch reads ETTDLQEIVL…IVDHALDLLR (72 aa). The tract at residues 260 to 338 is head domain (RuvB-H); the sequence is SAGLDATDIK…HLGRTMPDNN (79 aa). The DNA site is built by Arg-315 and Arg-320.

This sequence belongs to the RuvB family. As to quaternary structure, homohexamer. Forms an RuvA(8)-RuvB(12)-Holliday junction (HJ) complex. HJ DNA is sandwiched between 2 RuvA tetramers; dsDNA enters through RuvA and exits via RuvB. An RuvB hexamer assembles on each DNA strand where it exits the tetramer. Each RuvB hexamer is contacted by two RuvA subunits (via domain III) on 2 adjacent RuvB subunits; this complex drives branch migration. In the full resolvosome a probable DNA-RuvA(4)-RuvB(12)-RuvC(2) complex forms which resolves the HJ.

Its subcellular location is the cytoplasm. It catalyses the reaction ATP + H2O = ADP + phosphate + H(+). The RuvA-RuvB-RuvC complex processes Holliday junction (HJ) DNA during genetic recombination and DNA repair, while the RuvA-RuvB complex plays an important role in the rescue of blocked DNA replication forks via replication fork reversal (RFR). RuvA specifically binds to HJ cruciform DNA, conferring on it an open structure. The RuvB hexamer acts as an ATP-dependent pump, pulling dsDNA into and through the RuvAB complex. RuvB forms 2 homohexamers on either side of HJ DNA bound by 1 or 2 RuvA tetramers; 4 subunits per hexamer contact DNA at a time. Coordinated motions by a converter formed by DNA-disengaged RuvB subunits stimulates ATP hydrolysis and nucleotide exchange. Immobilization of the converter enables RuvB to convert the ATP-contained energy into a lever motion, pulling 2 nucleotides of DNA out of the RuvA tetramer per ATP hydrolyzed, thus driving DNA branch migration. The RuvB motors rotate together with the DNA substrate, which together with the progressing nucleotide cycle form the mechanistic basis for DNA recombination by continuous HJ branch migration. Branch migration allows RuvC to scan DNA until it finds its consensus sequence, where it cleaves and resolves cruciform DNA. The sequence is that of Holliday junction branch migration complex subunit RuvB from Levilactobacillus brevis (strain ATCC 367 / BCRC 12310 / CIP 105137 / JCM 1170 / LMG 11437 / NCIMB 947 / NCTC 947) (Lactobacillus brevis).